Here is a 1130-residue protein sequence, read N- to C-terminus: BTB/POZ domain-containing protein 7 (1130 aa).

Residues 1–10 (MGANASNYPH) show a composition bias toward polar residues. The disordered stretch occupies residues 1–24 (MGANASNYPHSCSPRVGGNSQAQQ). Glycine 2 carries the N-myristoyl glycine lipid modification. BTB domains follow at residues 142 to 211 (TDVD…GMED) and 247 to 341 (YDVV…DLSV). The 67-residue stretch at 413–479 (YGSKWVHRQA…WGEHQLMKRI (67 aa)) folds into the BACK domain. Serine 722 carries the phosphoserine modification. Disordered regions lie at residues 898 to 1050 (SEAG…PAHV) and 1062 to 1130 (FGLT…KSAL). Basic and acidic residues-rich tracts occupy residues 923 to 935 (PTLEQKADGRENQ) and 996 to 1005 (KKQEDPRREY). Phosphoserine is present on serine 1008. Positions 1063–1075 (GLTSNRPPSHSAC) are enriched in polar residues. Composition is skewed to basic and acidic residues over residues 1080–1090 (LEERSSRRLTD) and 1101–1112 (RNADLERGDSIS).

As to expression, specifically expressed in embryonic epithelia.

It is found in the nucleus. Its function is as follows. Acts as a mediator of epithelial dynamics and organ branching by promoting cleft progression. Induced following accumulation of fibronectin in forming clefts, leading to local expression of the cell-scattering SNAIL2 and suppression of E-cadherin levels, thereby altering cell morphology and reducing cell-cell adhesion. This stimulates cell separation at the base of forming clefts by local, dynamic intercellular gap formation and promotes cleft progression. In Mus musculus (Mouse), this protein is BTB/POZ domain-containing protein 7 (Btbd7).